We begin with the raw amino-acid sequence, 272 residues long: Indole-3-glycerol phosphate synthase (272 aa).

This sequence belongs to the TrpC family.

It carries out the reaction 1-(2-carboxyphenylamino)-1-deoxy-D-ribulose 5-phosphate + H(+) = (1S,2R)-1-C-(indol-3-yl)glycerol 3-phosphate + CO2 + H2O. It functions in the pathway amino-acid biosynthesis; L-tryptophan biosynthesis; L-tryptophan from chorismate: step 4/5. The protein is Indole-3-glycerol phosphate synthase of Mycolicibacterium paratuberculosis (strain ATCC BAA-968 / K-10) (Mycobacterium paratuberculosis).